A 703-amino-acid chain; its full sequence is Polyribonucleotide nucleotidyltransferase (703 aa).

Mg(2+)-binding residues include aspartate 487 and aspartate 493. Positions 554–613 (PKMETIKIDPDKIRDVIGKGGATIRSICEDTGASIDIDDNGTVRIYAESKLAADEAIYRI) constitute a KH domain. The 69-residue stretch at 623-691 (GKLYRGKVER…ARGRIKLSMK (69 aa)) folds into the S1 motif domain.

The protein belongs to the polyribonucleotide nucleotidyltransferase family. As to quaternary structure, component of the RNA degradosome, which is a multiprotein complex involved in RNA processing and mRNA degradation. Mg(2+) is required as a cofactor.

The protein localises to the cytoplasm. The enzyme catalyses RNA(n+1) + phosphate = RNA(n) + a ribonucleoside 5'-diphosphate. Involved in mRNA degradation. Catalyzes the phosphorolysis of single-stranded polyribonucleotides processively in the 3'- to 5'-direction. In Hahella chejuensis (strain KCTC 2396), this protein is Polyribonucleotide nucleotidyltransferase.